A 252-amino-acid polypeptide reads, in one-letter code: Putative zinc finger CCCH domain-containing protein 58 (252 aa).

A C3H1-type zinc finger spans residues 35–62 (NHKSVLCMKWREGRCHNGVACRYAHGEE). Disordered regions lie at residues 71-95 (RVGGGGTSMHARSSPPRDGASSGST), 109-180 (RHGR…SAAD), and 215-252 (TATSEPSATSDDDAITTTTSSSTTDADELDAAVAAPPK). Composition is skewed to low complexity over residues 133 to 149 (SARSTAPTPPRAHTTPP) and 229 to 238 (ITTTTSSSTT).

The polypeptide is Putative zinc finger CCCH domain-containing protein 58 (Oryza sativa subsp. japonica (Rice)).